Reading from the N-terminus, the 520-residue chain is Maturase K (520 aa).

This sequence belongs to the intron maturase 2 family. MatK subfamily.

It localises to the plastid. It is found in the chloroplast. Its function is as follows. Usually encoded in the trnK tRNA gene intron. Probably assists in splicing its own and other chloroplast group II introns. This chain is Maturase K, found in Liriope muscari (Big blue lilyturf).